We begin with the raw amino-acid sequence, 226 residues long: uncharacterized protein (226 aa).

This sequence to L.innocua lin1255, lin1742 and lin2408.

This is an uncharacterized protein from Listeria innocua serovar 6a (strain ATCC BAA-680 / CLIP 11262).